A 415-amino-acid polypeptide reads, in one-letter code: Procollagen C-endopeptidase enhancer 2 (415 aa).

The first 23 residues, 1 to 23 (MRGANAWAPLCLLLAAATQLSRQ), serve as a signal peptide directing secretion. Cystine bridges form between Cys33/Cys59, Cys86/Cys107, Cys154/Cys181, Cys208/Cys231, Cys297/Cys364, Cys301/Cys367, and Cys312/Cys415. CUB domains lie at 33–144 (CGGI…FSAA) and 154–268 (CGGL…YIFR). Residues 297–415 (CQQKCRRTGT…LLDALKNKQC (119 aa)) enclose the NTR domain. N-linked (GlcNAc...) asparagine glycosylation occurs at Asn355.

Interacts with heparin with high affinity, and type I or II collagen. In terms of processing, O-glycosylated; contains sialic acid. Highly expressed in the heart, trabecular meshwork, pituitary gland, bladder, mammary gland, trachea and placenta and weakly expressed in the brain. Expressed in cartilage.

The protein resides in the secreted. Its function is as follows. Binds to the C-terminal propeptide of types I and II procollagens and may enhance the cleavage of that propeptide by BMP1. In Homo sapiens (Human), this protein is Procollagen C-endopeptidase enhancer 2 (PCOLCE2).